The sequence spans 218 residues: MANSSPVYDWFQERLEIQDIADDVTSKYVPPHVNIFYCLGGITLVCFLIQFATGFAMTFYYKPTVTEAYNSVSYLMTDVSFGWLIRSVHRWSASMMVLMLILHVFRVYLTGGFKRPRELTWVTGVVMAVITVAFGVTGYSLPWDQVGYWAVKIVSGVPAAIPVVGDFMVELLRGGESVGQTTLTRFYSLHTFVLPWTLAIFMLMHFLMIRKQGISGPL.

A helical transmembrane segment spans residues 35–55 (IFYCLGGITLVCFLIQFATGF). Position 38 (C38) interacts with heme c. 2 residues coordinate heme b: H89 and H103. Transmembrane regions (helical) follow at residues 93-113 (ASMM…TGGF), 119-139 (LTWV…VTGY), and 189-209 (LHTF…FLMI). Residues H190 and H205 each contribute to the heme b site.

The protein belongs to the cytochrome b family. PetB subfamily. As to quaternary structure, the 4 large subunits of the cytochrome b6-f complex are cytochrome b6, subunit IV (17 kDa polypeptide, PetD), cytochrome f and the Rieske protein, while the 4 small subunits are PetG, PetL, PetM and PetN. The complex functions as a dimer. The cofactor is heme b. Heme c is required as a cofactor.

It localises to the cellular thylakoid membrane. Functionally, component of the cytochrome b6-f complex, which mediates electron transfer between photosystem II (PSII) and photosystem I (PSI), cyclic electron flow around PSI, and state transitions. This chain is Cytochrome b6, found in Prochlorococcus marinus (strain SARG / CCMP1375 / SS120).